The primary structure comprises 302 residues: Probable WRKY transcription factor 40 (302 aa).

Positions 140 to 206 (DTTLVVKDGY…YEGEHNHPMP (67 aa)) form a DNA-binding region, WRKY.

This sequence belongs to the WRKY group III family.

Its subcellular location is the nucleus. Transcription factor. Interacts specifically with the W box (5'-(T)TGAC[CT]-3'), a frequently occurring elicitor-responsive cis-acting element. This chain is Probable WRKY transcription factor 40, found in Arabidopsis thaliana (Mouse-ear cress).